The following is a 217-amino-acid chain: N-(5'-phosphoribosyl)anthranilate isomerase (217 aa).

It belongs to the TrpF family.

It catalyses the reaction N-(5-phospho-beta-D-ribosyl)anthranilate = 1-(2-carboxyphenylamino)-1-deoxy-D-ribulose 5-phosphate. It functions in the pathway amino-acid biosynthesis; L-tryptophan biosynthesis; L-tryptophan from chorismate: step 3/5. The protein is N-(5'-phosphoribosyl)anthranilate isomerase of Acaryochloris marina (strain MBIC 11017).